Reading from the N-terminus, the 253-residue chain is MVSSFTSAPRSGFYYFAQGWKLVSQPGIRRFVILPLLVNILLMGGAFWWLFTQLDVWIPTLMSYVPDWLQWLSYLLWPLAVISVLLVFGYFFSTIANWIAAPFNGLLAEQLEARLTGATPPDTGIFGIMKDVPRIMKREWQKFAWYLPRAIVLLILYLIPGIGQTVTPVLWFLFSAWMLAIQYCDYPFDNHKVPFKEMRTALRTRKITNMQFGALTSLFTMIPLLNLFIMPVAVCGATAMWVDCYRDKHAMWR.

Helical transmembrane passes span 31-51, 75-95, 151-171, and 222-242; these read FVIL…WWLF, LLWP…FSTI, IVLL…PVLW, and IPLL…AMWV.

This sequence belongs to the CysZ family.

The protein resides in the cell inner membrane. High affinity, high specificity proton-dependent sulfate transporter, which mediates sulfate uptake. Provides the sulfur source for the cysteine synthesis pathway. This Escherichia coli O8 (strain IAI1) protein is Sulfate transporter CysZ.